Consider the following 424-residue polypeptide: Histidine--tRNA ligase (424 aa).

It belongs to the class-II aminoacyl-tRNA synthetase family. As to quaternary structure, homodimer.

It is found in the cytoplasm. The enzyme catalyses tRNA(His) + L-histidine + ATP = L-histidyl-tRNA(His) + AMP + diphosphate + H(+). This Yersinia pestis bv. Antiqua (strain Antiqua) protein is Histidine--tRNA ligase.